A 1059-amino-acid chain; its full sequence is Dihydropyrimidine dehydrogenase [NADP(+)] (1059 aa).

The 4Fe-4S ferredoxin-type 1 domain occupies E84–S118. C94, C97, C102, C106, C145, C151, C155, and Q171 together coordinate [4Fe-4S] cluster. FAD-binding positions include G207 to A211, E231 to L239, R248, and L274. NADP(+) contacts are provided by residues A354–T357, R378–K379, R385, A451–G453, and D495–E501. G494 to T503 serves as a coordination point for FAD. FMN-binding positions include S564 and K588–T589. Residues N623 and N682–S684 each bind substrate. The active-site Proton acceptor is the C685. Position 723 (K723) interacts with FMN. N750–T751 provides a ligand contact to substrate. Residues G781, T807–G809, and C830–S831 contribute to the FMN site. 4Fe-4S ferredoxin-type domains are found at residues K955–V987 and H989–R1019. Positions 964, 967, 970, 974, 998, 1001, 1004, and 1008 each coordinate [4Fe-4S] cluster.

It belongs to the dihydropyrimidine dehydrogenase family. [4Fe-4S] cluster serves as cofactor. FAD is required as a cofactor. The cofactor is FMN.

It catalyses the reaction 5,6-dihydrouracil + NADP(+) = uracil + NADPH + H(+). It participates in amino-acid biosynthesis; beta-alanine biosynthesis. Its function is as follows. Involved in pyrimidine base degradation. Catalyzes the reduction of uracil and thymine. Involved in the degradation of the chemotherapeutic drug 5-fluorouracil. In Caenorhabditis elegans, this protein is Dihydropyrimidine dehydrogenase [NADP(+)] (dpyd-1).